A 357-amino-acid polypeptide reads, in one-letter code: Putative DENN domain-containing protein 10 B (357 aa).

In terms of domain architecture, uDENN spans 1 to 140 (MAAAELADTQ…TKGICQSEEN (140 aa)). Positions 159 to 299 (IKDIVSQFGM…PEKSESQVIQ (141 aa)) constitute a cDENN domain. A dDENN domain is found at 301-357 (IALKTREIFTNLAPFSEVSADGEKRVLNLEALKQKRFPPATENFLYHLAAAEQMLKI).

Belongs to the DENND10 family.

The protein resides in the late endosome. In terms of biological role, may be a guanine nucleotide exchange factor (GEF). This Homo sapiens (Human) protein is Putative DENN domain-containing protein 10 B.